A 336-amino-acid polypeptide reads, in one-letter code: Dihydroorotate dehydrogenase (quinone) (336 aa).

FMN is bound by residues 62 to 66 (AGLEK) and threonine 86. Substrate is bound at residue lysine 66. 111-115 (NRMGF) lines the substrate pocket. 2 residues coordinate FMN: asparagine 139 and asparagine 172. Asparagine 172 contacts substrate. Serine 175 (nucleophile) is an active-site residue. Asparagine 177 serves as a coordination point for substrate. FMN-binding residues include lysine 217 and threonine 245. Position 246 to 247 (246 to 247 (NT)) interacts with substrate. FMN is bound by residues glycine 268, glycine 297, and 318–319 (YS).

Belongs to the dihydroorotate dehydrogenase family. Type 2 subfamily. In terms of assembly, monomer. Requires FMN as cofactor.

The protein resides in the cell membrane. The catalysed reaction is (S)-dihydroorotate + a quinone = orotate + a quinol. It participates in pyrimidine metabolism; UMP biosynthesis via de novo pathway; orotate from (S)-dihydroorotate (quinone route): step 1/1. In terms of biological role, catalyzes the conversion of dihydroorotate to orotate with quinone as electron acceptor. This is Dihydroorotate dehydrogenase (quinone) from Aliivibrio salmonicida (strain LFI1238) (Vibrio salmonicida (strain LFI1238)).